A 280-amino-acid polypeptide reads, in one-letter code: tRNA (guanine-N(1)-)-methyltransferase (280 aa).

The tract at residues 71–94 is disordered; it reads DDVSSGTASTQDLQSALPHLSKPR. Residues 74 to 84 show a composition bias toward polar residues; sequence SSGTASTQDLQ. S-adenosyl-L-methionine contacts are provided by residues Gly146 and 170–175; that span reads IGDYVL.

This sequence belongs to the RNA methyltransferase TrmD family. As to quaternary structure, homodimer.

The protein localises to the cytoplasm. It carries out the reaction guanosine(37) in tRNA + S-adenosyl-L-methionine = N(1)-methylguanosine(37) in tRNA + S-adenosyl-L-homocysteine + H(+). Functionally, specifically methylates guanosine-37 in various tRNAs. The protein is tRNA (guanine-N(1)-)-methyltransferase of Corynebacterium aurimucosum (strain ATCC 700975 / DSM 44827 / CIP 107346 / CN-1) (Corynebacterium nigricans).